The chain runs to 119 residues: Large ribosomal subunit protein uL14m (119 aa).

The protein belongs to the universal ribosomal protein uL14 family.

The protein resides in the mitochondrion. In Tetrahymena pyriformis, this protein is Large ribosomal subunit protein uL14m.